The following is a 122-amino-acid chain: Large ribosomal subunit protein uL14 (122 aa).

The protein belongs to the universal ribosomal protein uL14 family. Part of the 50S ribosomal subunit. Forms a cluster with proteins L3 and L19. In the 70S ribosome, L14 and L19 interact and together make contacts with the 16S rRNA in bridges B5 and B8.

In terms of biological role, binds to 23S rRNA. Forms part of two intersubunit bridges in the 70S ribosome. The polypeptide is Large ribosomal subunit protein uL14 (Herpetosiphon aurantiacus (strain ATCC 23779 / DSM 785 / 114-95)).